A 264-amino-acid polypeptide reads, in one-letter code: Molybdenum transport system permease protein ModB (264 aa).

The next 6 helical transmembrane spans lie at 11–31 (VYLPAIAGIVFVAMPLVAIAI), 57–77 (TAAASTVLCVLLGVPMALVLA), 90–110 (LILLPLVLPPVVGGIALLYAF), 127–147 (IAFSTAAVVLAQTFVSLPYLV), 176–196 (WWRVTLPLLLPGVVSGSVLAF), and 234–254 (AAVALSLLLVVVAALVVLGVG). Positions 51-253 (LLLSVKTAAA…VVAALVVLGV (203 aa)) constitute an ABC transmembrane type-1 domain.

This sequence belongs to the binding-protein-dependent transport system permease family. CysTW subfamily.

Its subcellular location is the cell membrane. Part of the binding-protein-dependent transport system ModABCD for molybdenum; probably responsible for the translocation of the substrate across the membrane. The sequence is that of Molybdenum transport system permease protein ModB (modB) from Mycobacterium bovis (strain ATCC BAA-935 / AF2122/97).